The primary structure comprises 724 residues: Probable metal-nicotianamine transporter YSL13 (724 aa).

The tract at residues 1 to 54 (MATVPTPSEAHGGATPTAADVEMVEASELRRRGKPSGDRATGPSRDGAAAAAEE) is disordered. Transmembrane regions (helical) follow at residues 80–100 (AFVV…KLNL), 103–123 (GIIP…VRLW), 148–168 (CVVA…ILSM), 190–210 (LGWI…GLVP), 252–272 (LGIF…YTAT), 310–330 (IVNV…WPLI), 355–375 (VFIA…KMII), 423–443 (IPWY…IGTV), 455–475 (ILVA…GTGL), 487–507 (LAIF…LAGL), 541–561 (FVSQ…VFWL), 603–623 (LNLC…RDLV), 640–660 (FYIG…LFVW), and 675–695 (VASG…VLAL).

It belongs to the YSL (TC 2.A.67.2) family. In terms of tissue distribution, expressed in leaves and at low levels in root cortex.

The protein localises to the membrane. Functionally, may be involved in the transport of nicotianamine-chelated metals. In Oryza sativa subsp. japonica (Rice), this protein is Probable metal-nicotianamine transporter YSL13 (YSL13).